The chain runs to 244 residues: 2,3-bisphosphoglycerate-dependent phosphoglycerate mutase (244 aa).

Residues 8-15, 21-22, Arg60, 87-90, Lys98, 114-115, and 181-182 contribute to the substrate site; these read RHGESNWN, TG, ERHY, RR, and GN. His9 acts as the Tele-phosphohistidine intermediate in catalysis. The Proton donor/acceptor role is filled by Glu87.

It belongs to the phosphoglycerate mutase family. BPG-dependent PGAM subfamily.

The catalysed reaction is (2R)-2-phosphoglycerate = (2R)-3-phosphoglycerate. Its pathway is carbohydrate degradation; glycolysis; pyruvate from D-glyceraldehyde 3-phosphate: step 3/5. Functionally, catalyzes the interconversion of 2-phosphoglycerate and 3-phosphoglycerate. The protein is 2,3-bisphosphoglycerate-dependent phosphoglycerate mutase of Frankia alni (strain DSM 45986 / CECT 9034 / ACN14a).